The primary structure comprises 118 residues: Elongin-B (118 aa).

At methionine 1 the chain carries N-acetylmethionine. Residues 1 to 79 (MDVFLMIRRH…QAPATVGLAF (79 aa)) form the Ubiquitin-like domain. Threonine 84 carries the phosphothreonine modification. A disordered region spans residues 91 to 118 (EPFSSPPELPDVMKPQDSGGSANEQAVQ). Phosphoserine is present on residues serine 108 and serine 111. The span at 108-118 (SGGSANEQAVQ) shows a compositional bias: polar residues.

The protein belongs to the Elongin B family. In terms of assembly, heterotrimer of an A (ELOA, ELOA2 or ELOA3P), ELOB and ELOC subunit. The elongin BC complex interacts with EPOP; leading to recruit the elongin BC complex to Polycomb group (PcG) target genes, thereby restricting excessive activity of the PRC2/EED-EZH2 complex. Component of multiple cullin-RING E3 ubiquitin-protein ligase complexes composed of Elongin BC (ELOB and ELOC), a cullin (either CUL2 or CUL5), a catalytic subunit (either RBX1 or RNF7/RBX2), as well as a substrate adapter protein that can be either ASB2, ASB9, ASB11, KLHDC2, KLHDC3, KLHDC10, APPBP2, FEM1A, FEM1B, FEM1C, LRR1, PCMTD1, SOCS1, SOCS2, SOCS5, SPSB1, SPSB3, ELOA, VHL, WSB1 or RAB40C. As part of the Elongin BC E3 ubiquitin ligase complex; interacts with NRBP1. May also interact with DCUN1D1, DCUN1D2, DCUN1D3 and DCUN1D5. May form oligomers as a KLHDC2/KLHDC3-ELOB-ELOC complex; this interaction is autoinhibitory for the E3 ligase complex as the substrate-binding site of KLHDC2/KLHDC3 is blocked in the oligomer.

Its subcellular location is the nucleus. Its pathway is protein modification; protein ubiquitination. Functionally, SIII, also known as elongin, is a general transcription elongation factor that increases the RNA polymerase II transcription elongation past template-encoded arresting sites. Subunit A is transcriptionally active and its transcription activity is strongly enhanced by binding to the dimeric complex of the SIII regulatory subunits B and C (elongin BC complex). In embryonic stem cells, the elongin BC complex is recruited by EPOP to Polycomb group (PcG) target genes in order generate genomic region that display both active and repressive chromatin properties, an important feature of pluripotent stem cells. Core component of multiple cullin-2 and cullin-5-RING E3 ubiquitin-protein ligase complexes (ECS complexes), which mediate the ubiquitination of target proteins. By binding to BC-box motifs it seems to link target recruitment subunits, like VHL and members of the SOCS box family, to Cullin/RBX1 modules that activate E2 ubiquitination enzymes. Component the von Hippel-Lindau ubiquitination complex CBC(VHL). A number of ECS complexes (containing either KLHDC2, KLHDC3, KLHDC10, APPBP2, FEM1A, FEM1B or FEM1C as substrate-recognition component) are part of the DesCEND (destruction via C-end degrons) pathway, which recognizes a C-degron located at the extreme C terminus of target proteins, leading to their ubiquitination and degradation. The ECS(ASB9) complex mediates ubiquitination and degradation of CKB. As part of a multisubunit ubiquitin ligase complex, polyubiquitinates monoubiquitinated POLR2A. ECS(LRR1) ubiquitinates MCM7 and promotes CMG replisome disassembly by VCP and chromatin extraction during S-phase. As part of the ECS(RAB40C) complex, mediates ANKRD28 ubiquitination and degradation, thereby inhibiting protein phosphatase 6 (PP6) complex activity and focal adhesion assembly during cell migration. The sequence is that of Elongin-B from Mus musculus (Mouse).